The primary structure comprises 160 residues: uncharacterized protein (160 aa).

This is an uncharacterized protein from Human cytomegalovirus (strain AD169) (HHV-5).